A 311-amino-acid chain; its full sequence is MSQSLISFSNLDNWLFVAPALLLAVLSGYLSERVGIVNIAINGGMVFGGMFLSLMSYAFVPNANDSAPSWSLAISIPLSVIFASAVGFLFGIAAIKLKADHVIVGTGVNLLGTGINFFVAQNARSLLNDTDLRVRYSFVRTGNSVSIEGIAIFAFAIIFVLLVWYLMNFTKTGLRYRAVGENPNVIDTQGISVYKYQWFGVMASTMVAALAGCCFALSPQVPSFSSGDVSGFGFIAIAIMIISMWRIIPSIVISPLFALAYVLTTGVVGNANNTYLLRTIPFIISLLVMMVFGYLNVGPKNVGKHFDKGLR.

9 helical membrane-spanning segments follow: residues 11–31 (LDNWLFVAPALLLAVLSGYLS), 34–54 (VGIVNIAINGGMVFGGMFLSL), 72–92 (LAISIPLSVIFASAVGFLFGI), 101–121 (HVIVGTGVNLLGTGINFFVAQ), 147–167 (IEGIAIFAFAIIFVLLVWYLM), 198–218 (WFGVMASTMVAALAGCCFALS), 233–253 (GFIAIAIMIISMWRIIPSIVI), 257–277 (FALAYVLTTGVVGNANNTYLL), and 279–299 (TIPFIISLLVMMVFGYLNVGP).

It is found in the cell membrane. This is an uncharacterized protein from Mycoplasma pneumoniae (strain ATCC 29342 / M129 / Subtype 1) (Mycoplasmoides pneumoniae).